A 438-amino-acid chain; its full sequence is Anaerobic glycerol-3-phosphate dehydrogenase subunit B (438 aa).

This sequence belongs to the anaerobic G-3-P dehydrogenase subunit B family. In terms of assembly, composed of a catalytic GlpA/B dimer and of membrane bound GlpC. The cofactor is FMN.

The catalysed reaction is a quinone + sn-glycerol 3-phosphate = dihydroxyacetone phosphate + a quinol. The protein operates within polyol metabolism; glycerol degradation via glycerol kinase pathway; glycerone phosphate from sn-glycerol 3-phosphate (anaerobic route): step 1/1. In terms of biological role, conversion of glycerol 3-phosphate to dihydroxyacetone. Uses fumarate or nitrate as electron acceptor. The protein is Anaerobic glycerol-3-phosphate dehydrogenase subunit B of Vibrio vulnificus (strain YJ016).